Reading from the N-terminus, the 1147-residue chain is Myosin light chain kinase, smooth muscle (1147 aa).

Positions 1–41 (MDFRANLQRQVKPKTVSEEERKVHSPQQVDFRSVLAKKGTP) are actin-binding. The tract at residues 1 to 330 (MDFRANLQRQ…PPASPGTAPT (330 aa)) is disordered. The tract at residues 26 to 41 (PQQVDFRSVLAKKGTP) is calmodulin-binding. Pro residues predominate over residues 43 to 55 (TPVPEKAPPPKPA). Tandem repeats lie at residues 100-111 (SLKPVANAKPAE) and 112-123 (TLKPVANTKPAE). A 16 X 12 AA tandem repeats region spans residues 100–288 (SLKPVANAKP…KAVANAKPAE (189 aa)). Residues 124–132 (TLKPVANAE) form a 3; truncated repeat. Tandem repeats lie at residues 133 to 144 (TLKPMGNAKPAE), 145 to 156 (SSKPVGNTKPAE), 157 to 168 (TLKPVGNTKPAE), 169 to 180 (TLKPVGNIKPAE), 181 to 192 (TLKPVGNIKPAE), 193 to 204 (TLKPVGNTKPTE), 205 to 216 (TLKPVANAKSAE), 217 to 228 (TLKPIANTKPAE), 229 to 240 (TLKPVGNAKPAE), 241 to 252 (TLKPVGNAKPAE), 253 to 264 (TLKPVGNAKPAE), 265 to 276 (TLKPVGNAKPAE), and 277 to 288 (TLKAVANAKPAE). Positions 292–692 (PAGKEELKKE…TVTVNTEQKV (401 aa)) are actin-binding (calcium/calmodulin-insensitive). Residues 293–320 (AGKEELKKEVQNDVNCKREKAGAADNEK) are compositionally biased toward basic and acidic residues. Ig-like C2-type domains are found at residues 329-417 (PTFK…CHVT) and 469-557 (PQIP…VNLT). Cysteines 350 and 401 form a disulfide. Disordered stretches follow at residues 424-476 (SENA…QFPE) and 644-678 (SEPS…KEPE). The span at 459 to 472 (PKTPPKAATPPQIP) shows a compositional bias: pro residues. The region spanning 565 to 657 (PAGTPCASDI…QESELTTVGE (93 aa)) is the Fibronectin type-III domain. The segment covering 644 to 653 (SEPSQESELT) has biased composition (polar residues). Positions 662–677 (PKDEVEEVSDDDEKEP) are enriched in acidic residues. The residue at position 670 (Ser670) is a Phosphoserine. A Phosphotyrosine; by ABL1 modification is found at Tyr681. The region spanning 696–951 (YDIEERLGSG…CTQCLQHPWL (256 aa)) is the Protein kinase domain. Residues 702-710 (LGSGKFGQV) and Lys725 contribute to the ATP site. At Tyr807 the chain carries Phosphotyrosine; by ABL1. Asp817 functions as the Proton acceptor in the catalytic mechanism. Position 867 is a phosphotyrosine; by ABL1 (Tyr867). The calmodulin-binding stretch occupies residues 943–1006 (TQCLQHPWLM…SGLSGRKSST (64 aa)). Phosphoserine occurs at positions 991, 992, 1004, 1005, and 1008. Residues 999–1019 (LSGRKSSTGSPTSPLTAERLE) are disordered. Polar residues predominate over residues 1002 to 1013 (RKSSTGSPTSPL). Residue Thr1010 is modified to Phosphothreonine. Position 1011 is a phosphoserine (Ser1011). An Ig-like C2-type 3 domain is found at 1041 to 1130 (PYFSKTIRDL…GEATCTAELI (90 aa)). A disulfide bridge connects residues Cys1062 and Cys1114.

This sequence belongs to the protein kinase superfamily. CAMK Ser/Thr protein kinase family. In terms of assembly, all isoforms including Telokin bind calmodulin. Interacts with SVIL. Interacts with CTTN; this interaction is reduced during thrombin-induced endothelial cell (EC) contraction but is promoted by the barrier-protective agonist sphingosine 1-phosphate (S1P) within lamellipodia. A complex made of ABL1, CTTN and MYLK regulates cortical actin-based cytoskeletal rearrangement critical to sphingosine 1-phosphate (S1P)-mediated endothelial cell (EC) barrier enhancement. Binds to NAA10/ARD1 and PTK2B/PYK2. Mg(2+) is required as a cofactor. It depends on Ca(2+) as a cofactor. The C-terminus is deglutamylated by AGTPBP1/CCP1, AGBL1/CCP4 and AGBL4/CCP6, leading to the formation of Myosin light chain kinase, smooth muscle, deglutamylated form. The consequences of C-terminal deglutamylation are unknown. Post-translationally, can probably be down-regulated by phosphorylation. Tyrosine phosphorylation by ABL1 increases kinase activity, reverses MLCK-mediated inhibition of Arp2/3-mediated actin polymerization, and enhances CTTN-binding. Phosphorylation by SRC promotes CTTN binding. Isoform Telokin is found in all smooth muscle tested except the aorta. It is not present in non-muscle tissue.

The protein resides in the cytoplasm. The protein localises to the cell projection. It localises to the lamellipodium. It is found in the cleavage furrow. Its subcellular location is the cytoskeleton. The protein resides in the stress fiber. The enzyme catalyses L-seryl-[myosin light chain] + ATP = O-phospho-L-seryl-[myosin light chain] + ADP + H(+). The catalysed reaction is L-threonyl-[myosin light chain] + ATP = O-phospho-L-threonyl-[myosin light chain] + ADP + H(+). All catalytically active isoforms require binding to calcium and calmodulin for activation. Calcium/calmodulin-dependent myosin light chain kinase implicated in smooth muscle contraction via phosphorylation of myosin light chains (MLC). Also regulates actin-myosin interaction through a non-kinase activity. Phosphorylates PTK2B/PYK2 and myosin light-chains. Involved in the inflammatory response (e.g. apoptosis, vascular permeability, leukocyte diapedesis), cell motility and morphology, airway hyperreactivity and other activities relevant to asthma. Required for tonic airway smooth muscle contraction that is necessary for physiological and asthmatic airway resistance. Necessary for gastrointestinal motility. Implicated in the regulation of endothelial as well as vascular permeability, probably via the regulation of cytoskeletal rearrangements. In the nervous system it has been shown to control the growth initiation of astrocytic processes in culture and to participate in transmitter release at synapses formed between cultured sympathetic ganglion cells. Critical participant in signaling sequences that result in fibroblast apoptosis. Plays a role in the regulation of epithelial cell survival. Required for epithelial wound healing, especially during actomyosin ring contraction during purse-string wound closure. Mediates RhoA-dependent membrane blebbing. Triggers TRPC5 channel activity in a calcium-dependent signaling, by inducing its subcellular localization at the plasma membrane. Promotes cell migration (including tumor cells) and tumor metastasis. PTK2B/PYK2 activation by phosphorylation mediates ITGB2 activation and is thus essential to trigger neutrophil transmigration during acute lung injury (ALI). May regulate optic nerve head astrocyte migration. Probably involved in mitotic cytoskeletal regulation. Regulates tight junction probably by modulating ZO-1 exchange in the perijunctional actomyosin ring. Mediates burn-induced microvascular barrier injury; triggers endothelial contraction in the development of microvascular hyperpermeability by phosphorylating MLC. Essential for intestinal barrier dysfunction. Mediates Giardia spp.-mediated reduced epithelial barrier function during giardiasis intestinal infection via reorganization of cytoskeletal F-actin and tight junctional ZO-1. Necessary for hypotonicity-induced Ca(2+) entry and subsequent activation of volume-sensitive organic osmolyte/anion channels (VSOAC) in cervical cancer cells. In Oryctolagus cuniculus (Rabbit), this protein is Myosin light chain kinase, smooth muscle (MYLK).